Consider the following 627-residue polypeptide: 1-deoxy-D-xylulose-5-phosphate synthase (627 aa).

Residues histidine 76 and 117 to 119 (SHA) each bind thiamine diphosphate. Aspartate 148 is a binding site for Mg(2+). Thiamine diphosphate contacts are provided by residues 149–150 (GA), asparagine 178, phenylalanine 288, and glutamate 370. Asparagine 178 contributes to the Mg(2+) binding site.

Belongs to the transketolase family. DXPS subfamily. As to quaternary structure, homodimer. Requires Mg(2+) as cofactor. Thiamine diphosphate serves as cofactor.

It catalyses the reaction D-glyceraldehyde 3-phosphate + pyruvate + H(+) = 1-deoxy-D-xylulose 5-phosphate + CO2. The protein operates within metabolic intermediate biosynthesis; 1-deoxy-D-xylulose 5-phosphate biosynthesis; 1-deoxy-D-xylulose 5-phosphate from D-glyceraldehyde 3-phosphate and pyruvate: step 1/1. Functionally, catalyzes the acyloin condensation reaction between C atoms 2 and 3 of pyruvate and glyceraldehyde 3-phosphate to yield 1-deoxy-D-xylulose-5-phosphate (DXP). The polypeptide is 1-deoxy-D-xylulose-5-phosphate synthase (Cutibacterium acnes (strain DSM 16379 / KPA171202) (Propionibacterium acnes)).